We begin with the raw amino-acid sequence, 320 residues long: Aspartate carbamoyltransferase catalytic subunit (320 aa).

Positions 70 and 71 each coordinate carbamoyl phosphate. L-aspartate is bound at residue lysine 98. Carbamoyl phosphate is bound by residues arginine 120, histidine 149, and glutamine 152. Residues arginine 182 and arginine 237 each contribute to the L-aspartate site. Carbamoyl phosphate-binding residues include glycine 278 and proline 279.

This sequence belongs to the aspartate/ornithine carbamoyltransferase superfamily. ATCase family. In terms of assembly, heterododecamer (2C3:3R2) of six catalytic PyrB chains organized as two trimers (C3), and six regulatory PyrI chains organized as three dimers (R2).

The catalysed reaction is carbamoyl phosphate + L-aspartate = N-carbamoyl-L-aspartate + phosphate + H(+). It functions in the pathway pyrimidine metabolism; UMP biosynthesis via de novo pathway; (S)-dihydroorotate from bicarbonate: step 2/3. Catalyzes the condensation of carbamoyl phosphate and aspartate to form carbamoyl aspartate and inorganic phosphate, the committed step in the de novo pyrimidine nucleotide biosynthesis pathway. In Vesicomyosocius okutanii subsp. Calyptogena okutanii (strain HA), this protein is Aspartate carbamoyltransferase catalytic subunit.